We begin with the raw amino-acid sequence, 196 residues long: uncharacterized protein (196 aa).

The protein belongs to the mimivirus R24/R907 family.

This is an uncharacterized protein from Acanthamoeba polyphaga (Amoeba).